Reading from the N-terminus, the 445-residue chain is Phosphoglucosamine mutase (445 aa).

The Phosphoserine intermediate role is filled by serine 101. Mg(2+) contacts are provided by serine 101, aspartate 240, aspartate 242, and aspartate 244. Phosphoserine is present on serine 101.

Belongs to the phosphohexose mutase family. Mg(2+) is required as a cofactor. Activated by phosphorylation.

The enzyme catalyses alpha-D-glucosamine 1-phosphate = D-glucosamine 6-phosphate. Functionally, catalyzes the conversion of glucosamine-6-phosphate to glucosamine-1-phosphate. This is Phosphoglucosamine mutase from Pseudomonas fluorescens (strain ATCC BAA-477 / NRRL B-23932 / Pf-5).